The chain runs to 372 residues: NAD(P)H-quinone oxidoreductase subunit 1 (372 aa).

A run of 8 helical transmembrane segments spans residues 29–49 (WIPFPSFLMIIGATVGVLVVV), 97–117 (WLFTLGPVLVVLPVFVSYLIV), 130–150 (VGIFFWIALSSIAPIGLLMAG), 176–196 (LALSVLAIVMMSNSLSTIDIV), 204–224 (ILGWNIWRQPVGFFIFWIAAL), 254–274 (FALFYLGSYVNLVLSALVFAI), 308–328 (SLGITMTVLKAYFLVFIAVLM), and 347–367 (FLLPVSLVNLLLTAALKLAFP).

The protein belongs to the complex I subunit 1 family. As to quaternary structure, NDH-1 is composed of at least 11 different subunits.

It localises to the cellular thylakoid membrane. The catalysed reaction is a plastoquinone + NADH + (n+1) H(+)(in) = a plastoquinol + NAD(+) + n H(+)(out). The enzyme catalyses a plastoquinone + NADPH + (n+1) H(+)(in) = a plastoquinol + NADP(+) + n H(+)(out). Its function is as follows. NDH-1 shuttles electrons from an unknown electron donor, via FMN and iron-sulfur (Fe-S) centers, to quinones in the respiratory and/or the photosynthetic chain. The immediate electron acceptor for the enzyme in this species is believed to be plastoquinone. Couples the redox reaction to proton translocation, and thus conserves the redox energy in a proton gradient. The polypeptide is NAD(P)H-quinone oxidoreductase subunit 1 (Crocosphaera subtropica (strain ATCC 51142 / BH68) (Cyanothece sp. (strain ATCC 51142))).